Consider the following 676-residue polypeptide: RNA helicase NPH-II (676 aa).

Positions 172-347 (FSAWISHRPV…VFLPNPAFIH (176 aa)) constitute a Helicase ATP-binding domain. 185–192 (GGTGVGKT) serves as a coordination point for ATP. Residues 296–299 (DEVH) carry the DEXH box motif. The 170-residue stretch at 366–535 (NPSSRMAYIE…NYILYANKFN (170 aa)) folds into the Helicase C-terminal domain.

Belongs to the DEAD box helicase family. DEAH subfamily. As to quaternary structure, monomer.

The protein resides in the virion. The catalysed reaction is ATP + H2O = ADP + phosphate + H(+). NTP-dependent helicase that catalyzes unidirectional unwinding of 3'tailed duplex RNAs and plays an important role during transcription of early mRNAs, presumably by preventing R-loop formation behind the elongating RNA polymerase. Might also play a role in the export of newly synthesized mRNA chains out of the core into the cytoplasm. Required for replication and propagation of viral particles. The chain is RNA helicase NPH-II (OPG084) from Vaccinia virus (strain Copenhagen) (VACV).